The sequence spans 148 residues: Deoxyuridine 5'-triphosphate nucleotidohydrolase (148 aa).

Substrate is bound by residues 67 to 69 (RSG), N80, 84 to 86 (LID), and M94.

The protein belongs to the dUTPase family. Mg(2+) serves as cofactor.

The catalysed reaction is dUTP + H2O = dUMP + diphosphate + H(+). Its pathway is pyrimidine metabolism; dUMP biosynthesis; dUMP from dCTP (dUTP route): step 2/2. Functionally, this enzyme is involved in nucleotide metabolism: it produces dUMP, the immediate precursor of thymidine nucleotides and it decreases the intracellular concentration of dUTP so that uracil cannot be incorporated into DNA. The sequence is that of Deoxyuridine 5'-triphosphate nucleotidohydrolase from Paraburkholderia xenovorans (strain LB400).